We begin with the raw amino-acid sequence, 490 residues long: Aspartyl/glutamyl-tRNA(Asn/Gln) amidotransferase subunit B (490 aa).

Belongs to the GatB/GatE family. GatB subfamily. In terms of assembly, heterotrimer of A, B and C subunits.

The catalysed reaction is L-glutamyl-tRNA(Gln) + L-glutamine + ATP + H2O = L-glutaminyl-tRNA(Gln) + L-glutamate + ADP + phosphate + H(+). It catalyses the reaction L-aspartyl-tRNA(Asn) + L-glutamine + ATP + H2O = L-asparaginyl-tRNA(Asn) + L-glutamate + ADP + phosphate + 2 H(+). Allows the formation of correctly charged Asn-tRNA(Asn) or Gln-tRNA(Gln) through the transamidation of misacylated Asp-tRNA(Asn) or Glu-tRNA(Gln) in organisms which lack either or both of asparaginyl-tRNA or glutaminyl-tRNA synthetases. The reaction takes place in the presence of glutamine and ATP through an activated phospho-Asp-tRNA(Asn) or phospho-Glu-tRNA(Gln). This Synechococcus sp. (strain JA-3-3Ab) (Cyanobacteria bacterium Yellowstone A-Prime) protein is Aspartyl/glutamyl-tRNA(Asn/Gln) amidotransferase subunit B.